Consider the following 141-residue polypeptide: Large ribosomal subunit protein uL11 (141 aa).

Belongs to the universal ribosomal protein uL11 family. Part of the ribosomal stalk of the 50S ribosomal subunit. Interacts with L10 and the large rRNA to form the base of the stalk. L10 forms an elongated spine to which L12 dimers bind in a sequential fashion forming a multimeric L10(L12)X complex. In terms of processing, one or more lysine residues are methylated.

Functionally, forms part of the ribosomal stalk which helps the ribosome interact with GTP-bound translation factors. In Clostridium botulinum (strain Alaska E43 / Type E3), this protein is Large ribosomal subunit protein uL11.